The chain runs to 213 residues: Adenylate kinase (213 aa).

10–15 (GAGKGT) lines the ATP pocket. The segment at 30–59 (STGDMLRAALKEGTPLGLEAKKYMDQGALV) is NMP. AMP is bound by residues Thr31, Arg36, 57-59 (ALV), 85-88 (GFPR), and Gln92. Residues 126–163 (GRRTCRSCGAGFHVMFDPPKTDGKCDKCGGELYQRDDD) form an LID region. An ATP-binding site is contributed by Arg127. Residues Cys130, Cys133, Cys150, and Cys153 each coordinate Zn(2+). Arg160 and Arg171 together coordinate AMP. Gly199 is a binding site for ATP.

The protein belongs to the adenylate kinase family. Monomer.

Its subcellular location is the cytoplasm. The catalysed reaction is AMP + ATP = 2 ADP. It functions in the pathway purine metabolism; AMP biosynthesis via salvage pathway; AMP from ADP: step 1/1. In terms of biological role, catalyzes the reversible transfer of the terminal phosphate group between ATP and AMP. Plays an important role in cellular energy homeostasis and in adenine nucleotide metabolism. In Syntrophobacter fumaroxidans (strain DSM 10017 / MPOB), this protein is Adenylate kinase.